Here is a 180-residue protein sequence, read N- to C-terminus: MTDEPVKVVNKWDGPTVKNALDEVVKKILNDKVGWTESHNLMNLRLLISFIGVAFSAFACGYDYYEPFPKSKIVLAVCSVSYFICMGILQMYQWYVEKDCIYEATEVDGKQSRKWAWSSEIKAHDDKYTLSAEFKKEGRSGQGKITKSIGAYIDNDGEIIVPLVKKEVDDLYNRLIRSEQ.

Residues Met1–Arg45 lie on the Cytoplasmic side of the membrane. A helical transmembrane segment spans residues Leu46–Glu66. Residues Pro67 to Lys72 lie on the Lumenal side of the membrane. Residues Ile73 to Gln93 form a helical membrane-spanning segment. Residues Trp94–Gln180 are Cytoplasmic-facing.

Belongs to the SPCS2 family. As to quaternary structure, component of the signal peptidase complex (SPC) composed of a catalytic subunit sec-11 and three accessory subunits spcs-1, spcs-2 and spcs-3. The complex induces a local thinning of the ER membrane which is used to measure the length of the signal peptide (SP) h-region of protein substrates. This ensures the selectivity of the complex towards h-regions shorter than 18-20 amino acids.

It is found in the endoplasmic reticulum membrane. Component of the signal peptidase complex (SPC) which catalyzes the cleavage of N-terminal signal sequences from nascent proteins as they are translocated into the lumen of the endoplasmic reticulum. Enhances the enzymatic activity of SPC and facilitates the interactions between different components of the translocation site. The polypeptide is Signal peptidase complex subunit 2 (Caenorhabditis elegans).